The chain runs to 143 residues: Large ribosomal subunit protein uL13 (143 aa).

The protein belongs to the universal ribosomal protein uL13 family. Part of the 50S ribosomal subunit.

Functionally, this protein is one of the early assembly proteins of the 50S ribosomal subunit, although it is not seen to bind rRNA by itself. It is important during the early stages of 50S assembly. This Clostridioides difficile (strain 630) (Peptoclostridium difficile) protein is Large ribosomal subunit protein uL13.